A 351-amino-acid polypeptide reads, in one-letter code: Tryptophan--tRNA ligase (351 aa).

ATP is bound by residues 11–13 (RPT) and 19–20 (GH). Residues 12-20 (PTGALHLGH) carry the 'HIGH' region motif. Residue aspartate 139 coordinates L-tryptophan. ATP-binding positions include 151–153 (GRD), leucine 190, and 198–202 (KMSKS). The 'KMSKS' region motif lies at 198-202 (KMSKS).

It belongs to the class-I aminoacyl-tRNA synthetase family. In terms of assembly, homodimer.

The protein resides in the cytoplasm. The enzyme catalyses tRNA(Trp) + L-tryptophan + ATP = L-tryptophyl-tRNA(Trp) + AMP + diphosphate + H(+). Catalyzes the attachment of tryptophan to tRNA(Trp). The polypeptide is Tryptophan--tRNA ligase (Borreliella burgdorferi (strain ATCC 35210 / DSM 4680 / CIP 102532 / B31) (Borrelia burgdorferi)).